The chain runs to 480 residues: Salicylate hydroxylase asL1 (480 aa).

Residues 17-37 traverse the membrane as a helical segment; that stretch reads PMEIAIVGGGIVGVILAIGLT. FAD contacts are provided by Glu-47 and Ala-60. N-linked (GlcNAc...) asparagine glycosylation occurs at Asn-87. FAD is bound at residue Arg-131. N-linked (GlcNAc...) asparagine glycosylation occurs at Asn-168. Active-site residues include Arg-213 and Tyr-246. An N-linked (GlcNAc...) asparagine glycan is attached at Asn-250. FAD is bound by residues Asp-329 and Ala-342. N-linked (GlcNAc...) asparagine glycans are attached at residues Asn-400 and Asn-464.

This sequence belongs to the paxM FAD-dependent monooxygenase family. It depends on FAD as a cofactor.

The protein localises to the membrane. It functions in the pathway secondary metabolite biosynthesis; terpenoid biosynthesis. Functionally, salicylate hydroxylase; part of the gene cluster that mediates the biosynthesis of xenovulene A, an unusual meroterpenoid that has potent inhibitory effects on the human gamma-aminobutyrate A (GABAA) benzodiazepine receptor. The first step of xenovulene A biosynthesis is the biosynthesis of 3-methylorcinaldehyde performed by the non-reducing polyketide synthase aspks1. The salicylate hydroxylase asL1 then catalyzes the oxidative dearomatization of 3-methylorcinaldehyde to yield a dearomatized hydroxycyclohexadione. The 2-oxoglutarate-dependent dioxygenase asL3 further catalyzes the oxidative ring expansion to provide the first tropolone metabolite. The cytochrome P450 monooxygenase asR2 allows the synthesis of tropolone hemiacetal. In parallel, a previously unrecognised class of terpene cyclase, asR6, produces alpha-humulene from farnesylpyrophosphate (FPP). The putative Diels-Alderase asR5 probably catalyzes the formation of the tropolone-humulene skeleton by linking humulene and the polyketide moiety. Oxidative-ring contractions catalyzed by asL4 and asL6 then processively remove carbon atoms from the polyketide to yield xenovulene A. In Sarocladium schorii (Acremonium strictum (strain IMI 501407)), this protein is Salicylate hydroxylase asL1.